Consider the following 344-residue polypeptide: Small ribosomal subunit protein bS1m (344 aa).

A Phosphoserine modification is found at S327.

Belongs to the bacterial ribosomal protein bS1 family. As to quaternary structure, component of the mitochondrial small ribosomal subunit (mt-SSU). Mature yeast 74S mitochondrial ribosomes consist of a small (37S) and a large (54S) subunit. The 37S small subunit contains a 15S ribosomal RNA (15S mt-rRNA) and 34 different proteins. The 54S large subunit contains a 21S rRNA (21S mt-rRNA) and 46 different proteins.

The protein localises to the mitochondrion. In terms of biological role, component of the mitochondrial ribosome (mitoribosome), a dedicated translation machinery responsible for the synthesis of mitochondrial genome-encoded proteins, including at least some of the essential transmembrane subunits of the mitochondrial respiratory chain. The mitoribosomes are attached to the mitochondrial inner membrane and translation products are cotranslationally integrated into the membrane. bS1m functionally interacts with the 5'-UTR of mitochondrial mRNAs. This chain is Small ribosomal subunit protein bS1m (MRP51), found in Saccharomyces cerevisiae (strain ATCC 204508 / S288c) (Baker's yeast).